A 393-amino-acid polypeptide reads, in one-letter code: Formate-dependent phosphoribosylglycinamide formyltransferase (393 aa).

N(1)-(5-phospho-beta-D-ribosyl)glycinamide contacts are provided by residues 22 to 23 (EL) and Glu82. Residues Arg114, Lys155, 160–165 (SSGKGQ), 195–198 (ESFV), and Glu203 each bind ATP. The 190-residue stretch at 119 to 308 (RLAAEELGLR…EFALHVRAVL (190 aa)) folds into the ATP-grasp domain. Mg(2+) is bound by residues Glu267 and Glu279. N(1)-(5-phospho-beta-D-ribosyl)glycinamide contacts are provided by residues Asp286, Lys356, and 363-364 (RR).

The protein belongs to the PurK/PurT family. Homodimer.

The enzyme catalyses N(1)-(5-phospho-beta-D-ribosyl)glycinamide + formate + ATP = N(2)-formyl-N(1)-(5-phospho-beta-D-ribosyl)glycinamide + ADP + phosphate + H(+). Its pathway is purine metabolism; IMP biosynthesis via de novo pathway; N(2)-formyl-N(1)-(5-phospho-D-ribosyl)glycinamide from N(1)-(5-phospho-D-ribosyl)glycinamide (formate route): step 1/1. In terms of biological role, involved in the de novo purine biosynthesis. Catalyzes the transfer of formate to 5-phospho-ribosyl-glycinamide (GAR), producing 5-phospho-ribosyl-N-formylglycinamide (FGAR). Formate is provided by PurU via hydrolysis of 10-formyl-tetrahydrofolate. This is Formate-dependent phosphoribosylglycinamide formyltransferase from Oleidesulfovibrio alaskensis (strain ATCC BAA-1058 / DSM 17464 / G20) (Desulfovibrio alaskensis).